An 831-amino-acid chain; its full sequence is Cadherin-related family member 5 (831 aa).

The N-terminal stretch at 1–28 is a signal peptide; it reads MGAPALLWPSLLLPWLTVLFGQPPGTLA. Residues 29 to 641 lie on the Extracellular side of the membrane; it reads QTQVCSVNQT…GQRFSTVDMA (613 aa). Asparagine 36, asparagine 45, asparagine 84, asparagine 135, asparagine 143, asparagine 173, asparagine 201, asparagine 287, asparagine 311, asparagine 408, and asparagine 475 each carry an N-linked (GlcNAc...) asparagine glycan. Cadherin domains lie at 53–125, 128–240, 252–357, and 358–459; these read VNIF…DNAP, SFEI…TPWF, IHAQ…PLQF, and SQSL…ERER. The disordered stretch occupies residues 452–632; that stretch reads IQVSERERTP…STGAGEQGDG (181 aa). Residues 473 to 491 are compositionally biased toward polar residues; sequence SSNTTMEAPLTSGTSQRPA. Low complexity predominate over residues 505–540; it reads GGTTLRPPTPASSIPGGSPTLGTSTSPQTTTPGGDS. Polar residues predominate over residues 541–554; it reads AQTPKPGTSHPTAP. A run of 2 repeats spans residues 541–571 and 572–602. The segment at 541-614 is 3 X 31 AA approximate tandem repeats; that stretch reads AQTPKPGTSH…TPKPGTSQST (74 aa). Positions 555–572 are enriched in low complexity; that stretch reads TSRTSTSLMTTSSRSDST. 2 stretches are compositionally biased toward polar residues: residues 573-582 and 589-623; these read QTPKPGTSQP and ASTS…SLPS. One copy of the 3; truncated repeat lies at 605-614; sequence TPKPGTSQST. Residues 642–662 form a helical membrane-spanning segment; that stretch reads VLGGVLGALLLLALICLVILV. Residues 663-831 lie on the Cytoplasmic side of the membrane; that stretch reads HKHYRHRLAC…FGVDADNTYI (169 aa). The interval 663–831 is mediates interaction with USH1C and MYO7B and is required for proper localization to microvilli tips and function in microvilli organization; the sequence is HKHYRHRLAC…FGVDADNTYI (169 aa). Disordered stretches follow at residues 675-774 and 793-831; these read GKAS…GGYK and EPTA…NTYI. Serine 699, serine 721, and serine 725 each carry phosphoserine. The segment covering 716 to 738 has biased composition (pro residues); it reads PLRPPSPMSSSPTPPSSTPPSPQ. At threonine 728 the chain carries Phosphothreonine. Residues serine 736 and serine 753 each carry the phosphoserine modification. A compositionally biased stretch (basic and acidic residues) spans 761–771; sequence LTKERRPEGEG. Threonine 795 carries the post-translational modification Phosphothreonine. The span at 797 to 807 shows a compositional bias: low complexity; sequence DVDSASASGSE. Phosphoserine is present on residues serine 802, serine 804, and serine 806.

Part of the IMAC/intermicrovillar adhesion complex/intermicrovillar tip-link complex composed of ANKS4B, MYO7B, USH1C, CDHR2 and CDHR5. Interacts (via cytoplasmic domain) with USH1C and MYO7B; required for proper localization of CDHR5 to microvilli tips and its function in brush border differentiation. N- and O-glycosylated.

The protein resides in the apical cell membrane. It is found in the cell projection. It localises to the microvillus membrane. In terms of biological role, intermicrovillar adhesion molecule that forms, via its extracellular domain, calcium-dependent heterophilic complexes with CDHR2 on adjacent microvilli. Thereby, controls the packing of microvilli at the apical membrane of epithelial cells. Through its cytoplasmic domain, interacts with microvillus cytoplasmic proteins to form the intermicrovillar adhesion complex/IMAC. This complex plays a central role in microvilli and epithelial brush border differentiation. The chain is Cadherin-related family member 5 from Mus musculus (Mouse).